Here is a 630-residue protein sequence, read N- to C-terminus: Biosynthetic arginine decarboxylase (630 aa).

K99 is modified (N6-(pyridoxal phosphate)lysine). Position 279-289 (279-289 (FDVGGGLGVDY)) interacts with substrate.

Belongs to the Orn/Lys/Arg decarboxylase class-II family. SpeA subfamily. Mg(2+) is required as a cofactor. The cofactor is pyridoxal 5'-phosphate.

It catalyses the reaction L-arginine + H(+) = agmatine + CO2. The protein operates within amine and polyamine biosynthesis; agmatine biosynthesis; agmatine from L-arginine: step 1/1. Functionally, catalyzes the biosynthesis of agmatine from arginine. The sequence is that of Biosynthetic arginine decarboxylase from Neisseria meningitidis serogroup B (strain ATCC BAA-335 / MC58).